The following is a 282-amino-acid chain: HTH-type transcriptional activator RhaR (282 aa).

An HTH araC/xylS-type domain is found at 179-277 (DKLITALAGS…GMTPVQWRHR (99 aa)). DNA-binding regions (H-T-H motif) lie at residues 196-217 (EKFC…RTQT) and 244-267 (VSEV…NREV).

In terms of assembly, binds DNA as a dimer.

It is found in the cytoplasm. Functionally, activates expression of the rhaSR operon in response to L-rhamnose. The sequence is that of HTH-type transcriptional activator RhaR from Enterobacter sp. (strain 638).